The chain runs to 531 residues: Peptide chain release factor 3 (531 aa).

Residues 13-282 (AKRRTFAIIS…TLIKYSPPPK (270 aa)) enclose the tr-type G domain. GTP contacts are provided by residues 22–29 (SHPDAGKT), 90–94 (DTPGH), and 144–147 (NKLD).

This sequence belongs to the TRAFAC class translation factor GTPase superfamily. Classic translation factor GTPase family. PrfC subfamily.

It localises to the cytoplasm. Functionally, increases the formation of ribosomal termination complexes and stimulates activities of RF-1 and RF-2. It binds guanine nucleotides and has strong preference for UGA stop codons. It may interact directly with the ribosome. The stimulation of RF-1 and RF-2 is significantly reduced by GTP and GDP, but not by GMP. This is Peptide chain release factor 3 from Psychrobacter arcticus (strain DSM 17307 / VKM B-2377 / 273-4).